Here is a 425-residue protein sequence, read N- to C-terminus: Serine--tRNA ligase (425 aa).

Residue 227–229 (TAE) participates in L-serine binding. ATP is bound by residues 258–260 (RRE) and valine 274. Glutamate 281 contributes to the L-serine binding site. 347–350 (ETHS) provides a ligand contact to ATP. L-serine is bound at residue threonine 382.

Belongs to the class-II aminoacyl-tRNA synthetase family. Type-1 seryl-tRNA synthetase subfamily. In terms of assembly, homodimer. The tRNA molecule binds across the dimer.

Its subcellular location is the cytoplasm. It carries out the reaction tRNA(Ser) + L-serine + ATP = L-seryl-tRNA(Ser) + AMP + diphosphate + H(+). It catalyses the reaction tRNA(Sec) + L-serine + ATP = L-seryl-tRNA(Sec) + AMP + diphosphate + H(+). Its pathway is aminoacyl-tRNA biosynthesis; selenocysteinyl-tRNA(Sec) biosynthesis; L-seryl-tRNA(Sec) from L-serine and tRNA(Sec): step 1/1. In terms of biological role, catalyzes the attachment of serine to tRNA(Ser). Is also able to aminoacylate tRNA(Sec) with serine, to form the misacylated tRNA L-seryl-tRNA(Sec), which will be further converted into selenocysteinyl-tRNA(Sec). The polypeptide is Serine--tRNA ligase (Deinococcus radiodurans (strain ATCC 13939 / DSM 20539 / JCM 16871 / CCUG 27074 / LMG 4051 / NBRC 15346 / NCIMB 9279 / VKM B-1422 / R1)).